A 2302-amino-acid chain; its full sequence is MMDFHFSFLFLLIGTSESQVDVSSSFDGTGYDITLSSVSATTYSSPVSRTLATNVTKPGPPVFLAGERVGSAGILLSWNTPPNPNGRIISYVVKYKEVCPWMQTAYTRARAKPDSLEVLLTNLNPGTTYEIKVAAENNAGIGVFSDPFLFQTAESAPGKVVNLTVEALNYSAVNLIWYLPRQPNGKITSFKISVKHARSGIVVKDVSLRVEDILSGKLPECNENSESFLWSTTSPSPTLGRVTPTVRTTQSSSTAARSKISSVWKEPISFVVTHLRPYTTYLFEVSAVTTEAGYIDSTIVRTPESVPEGPPQNCIMGNVTGKAFSISWDPPTIVTGKFSYRVELYGPSGRILDNSTKDLRFAFTHLTPFTMYDVYVAAETSAGVGPKSNLSVFTPPDVPGAVFDLQIAEVEATEIRITWRKPRQPNGIISQYRVKVSVLETGVVLENTLLTGQDESISNPMSPEIMNLVDPMIGFYEGSGEMSSDLHSPASFIYNSHPHNDFPASTRAEEQSSPVVTTRNQYMTDITAEQLSYVVRRLVPFTEHTISVSAFTIMGEGPPTVLTVRTREQVPSSIQIINYKNISSSSILLYWDPPEYPNGKITHYTIYATELDTNRAFQMTTVDNSFLITGLKKYTRYKMRVAASTHVGESSLSEENDIFVRTPEDEPESSPQDVQVTGVSPSELRLKWSPPEKPNGIIIAYEVLYQNADTLFVKNTSTTDIIISDLKPYTLYNISIRSYTRLGHGNQSSSLLSVRTSETVPDSAPENITYKNISSGEIEISFLPPRSPNGIIQKYTIYLKRSNSHEARTINTTSLTQTIGGLKKYTHYVIEVSASTLKGEGIRSRPISILTEEDAPDSPPQNFSVKQLSGVTVMLSWQPPLEPNGIILYYTVYVWDKSSLRAINATEASLVLSDLDYNVDYGACVTASTRFGDGNARSSIINFRTPEGEPSDPPNDVHYVNLSSSSIILFWTPPVKPNGIIQYYSVYYQNTSGTFVQNFTLLQVTKESDNVTVSARIYRLAIFSYYTFWLTASTSVGNGNKSSDIIHVYTDQDIPEGPVGNLTFESISSTAIHVSWEPPSQPNGLVFYYLSLNLQQSPPRHMIPPLVTYENSIDFDDLEKYTDYIFKITPSTEKGFSETYTTQLHIKTEEDVPDTPPIINTFKNLSSTSILLSWDPPLKPNGAILGYHLTLQGPHANHTFVTSGNHIVLEELSPFTLYSFFAAARTMKGLGPSSILFFYTDESAPLAPPQNLTLINYTSDFVWLTWSPSPLPGGIVKVYSFKIHEHETDTVFYKNISGLQTDAKLEGLEPVSTYSVSVSAFTKVGNGNQYSNVVEFTTQESVPEAVRNIECVARDWQSVSVRWDPPRKTNGIIIHYMITVGGNSTKVSPRDPTYTFTKLLPNTSYVFEVRASTSAGEGNESRCDISTLPETVPSAPTNVAFSNVQSTSATLTWTKPDTIFGYFQNYKITTQLRAQKCREWEPEECIEHQKDQYLYEANQTEETVHGLKKFRWYRFQVAASTNVGYSNASEWISTQTLPGPPDGPPENVHVVATSPFGINISWSEPAVITGPTFYLIDVKSVDDDDFNISFLKSNEENKTTEINNLEVFTRYSVVITAFVGNVSRAYTDGKSSAEVIITTLESVPKDPPNNMTFQKIPDEVTKFQLTFLPPSQPNGNIRVYQALVYREDDPTAVQIHNFSIIQKTDTSIIAMLEGLKGGHTYNISVYAINSAGAGPKVQMRITMDIKAPARPKSKPIPIRDATGKLLVTSTTITIRMPICYYNDDHGPIRNVQVLVAETGAQQDGNVTKWYDAYFNKARPYFTNEGFPNPPCIEGKTKFSGNEEIYVIGADNACMIPGNEEKICNGPLKPKKQYLFKFRATNVMGQFTDSEYSDPIKTLGEGLSERTVEIILSVTLCILSIILLGTAIFAFVRIRQKQKEGGTYSPRDAEIIDTKFKLDQLITVADLELKDERLTRLLSYRKSIKPISKKSFLQHVEELCTNSNLKFQEEFSELPKFLQDLSSTDADLPWNRAKNRFPNIKPYNNNRVKLIADVSLPGSDYINASYVSGYLCPNEFIATQGPLPGTVGDFWRMVWETRTKTLVMLTQCFEKGRIRCHQYWPEDNKPVTVFGDIVITKLMEDIQIDWTIRDLKIERHGDCMTVRQCNFTGWPEHGVPENTTPLIHFVKLVRTSRAHDTTPMVVHCSAGVGRTGVFIALDHLTQHINNHDFVDIYGLVAELRSERMCMVQNLAQYIFLHQCILDLLSNKGGHQPVCFVNYSTLQKMDSLDAMEGDVELEWEETTM.

The first 18 residues, 1 to 18 (MMDFHFSFLFLLIGTSES), serve as a signal peptide directing secretion. Residues 19 to 1908 (QVDVSSSFDG…GEGLSERTVE (1890 aa)) are Extracellular-facing. Asn-54 is a glycosylation site (N-linked (GlcNAc...) asparagine). 17 consecutive Fibronectin type-III domains span residues 60–155 (PPVF…TAES), 159–254 (KVVN…SSST), 310–398 (PPQN…PPDV), 401–501 (AVFD…PHND), 474–566 (GFYE…TVRT), 570–665 (VPSS…TPED), 670–759 (SPQD…TSET), 764–854 (APEN…TEED), 859–948 (PPQN…TPEG), 953–1053 (PPND…TDQD), 1058–1151 (PVGN…TEED), 1156–1243 (PPII…TDES), 1248–1341 (PPQN…TQES), 1345–1431 (AVRN…LPET), 1435–1539 (APTN…TLPG), 1544–1642 (PPEN…TLES), and 1647–1748 (PPNN…IKAP). N-linked (GlcNAc...) asparagine glycans are attached at residues Asn-162, Asn-169, Asn-318, Asn-354, and Asn-389. N-linked (GlcNAc...) asparagine glycosylation is found at Asn-733 and Asn-746. Asn-904, Asn-998, Asn-1010, and Asn-1040 each carry an N-linked (GlcNAc...) asparagine glycan. N-linked (GlcNAc...) asparagine glycans are attached at residues Asn-1251 and Asn-1256. An N-linked (GlcNAc...) asparagine glycan is attached at Asn-1805. The helical transmembrane segment at 1909–1929 (IILSVTLCILSIILLGTAIFA) threads the bilayer. Residues 1930-2302 (FVRIRQKQKE…VELEWEETTM (373 aa)) are Cytoplasmic-facing. Residues 2006–2262 (FQEEFSELPK…IFLHQCILDL (257 aa)) enclose the Tyrosine-protein phosphatase domain. The active-site Phosphocysteine intermediate is Cys-2203.

It belongs to the protein-tyrosine phosphatase family. Receptor class 2A subfamily. As to quaternary structure, interacts with TPRN. TPRN, CLIC5 and PTPQR form concentric rings at the base of stereocilia and may form a complex.

It is found in the cell projection. Its subcellular location is the stereocilium. It localises to the apical cell membrane. The protein localises to the basal cell membrane. It carries out the reaction a 1,2-diacyl-sn-glycero-3-phospho-(1D-myo-inositol-3,4,5-trisphosphate) + H2O = a 1,2-diacyl-sn-glycero-3-phospho-(1D-myo-inositol-4,5-bisphosphate) + phosphate. The catalysed reaction is a 1,2-diacyl-sn-glycero-3-phospho-(1D-myo-inositol-3,4,5-trisphosphate) + H2O = a 1,2-diacyl-sn-glycero-3-phospho-(1D-myo-inositol-3,4-bisphosphate) + phosphate. The enzyme catalyses a 1,2-diacyl-sn-glycero-3-phospho-(1D-myo-inositol-3,5-bisphosphate) + H2O = a 1,2-diacyl-sn-glycero-3-phospho-(1D-myo-inositol-5-phosphate) + phosphate. It catalyses the reaction a 1,2-diacyl-sn-glycero-3-phospho-(1D-myo-inositol-3,5-bisphosphate) + H2O = a 1,2-diacyl-sn-glycero-3-phospho-(1D-myo-inositol-3-phosphate) + phosphate. It carries out the reaction a 1,2-diacyl-sn-glycero-3-phospho-(1D-myo-inositol-4,5-bisphosphate) + H2O = a 1,2-diacyl-sn-glycero-3-phospho-(1D-myo-inositol 4-phosphate) + phosphate. Its function is as follows. Dephosphorylates phosphatidylinositol phosphates, such as phosphatidylinositol 3,4,5-trisphosphate (PIP3) and phosphatidylinositol 3,5-diphosphates, with preference for PIP3. Phosphate can be hydrolyzed from the D3 and D5 positions in the inositol ring. Has low tyrosine-protein phosphatase activity in vitro; however, the relevance of such activity in vivo is unclear. Plays an important role in adipogenesis of mesenchymal stem cells (MSCs). Regulates the phosphorylation state of AKT1 by regulating the levels of PIP3 level in MSCs and preadipocyte cells. Required for hair bundle maturation, a process that enables hair cells to detect and transmit sound and balance signals effectively, therefore affecting auditory function. May act by regulating the level of phosphatidylinositol 4,5-bisphosphate (PIP2) level in the basal region of hair bundles. The polypeptide is Phosphatidylinositol phosphatase PTPRQ (Ptprq) (Rattus norvegicus (Rat)).